Consider the following 427-residue polypeptide: ATP synthase subunit beta (427 aa).

160–167 (GGAGVGKT) contacts ATP.

It belongs to the ATPase alpha/beta chains family. As to quaternary structure, F-type ATPases have 2 components, CF(1) - the catalytic core - and CF(0) - the membrane proton channel. CF(1) has five subunits: alpha(3), beta(3), gamma(1), delta(1), epsilon(1). CF(0) has three main subunits: a(1), b(2) and c(9-12). The alpha and beta chains form an alternating ring which encloses part of the gamma chain. CF(1) is attached to CF(0) by a central stalk formed by the gamma and epsilon chains, while a peripheral stalk is formed by the delta and b chains.

The protein localises to the cell membrane. The catalysed reaction is ATP + H2O + 4 H(+)(in) = ADP + phosphate + 5 H(+)(out). In terms of biological role, produces ATP from ADP in the presence of a proton gradient across the membrane. The catalytic sites are hosted primarily by the beta subunits. The sequence is that of ATP synthase subunit beta from Peptococcus niger.